The following is a 386-amino-acid chain: uncharacterized protein (386 aa).

9 helical membrane passes run Asn48 to Tyr68, Pro78 to Ile98, Leu136 to Ile156, Tyr171 to Ile191, Phe213 to Leu233, Val253 to Leu273, Phe285 to Val305, Trp316 to Leu336, and Phe344 to Ala364.

The protein belongs to the CDP-alcohol phosphatidyltransferase class-I family.

The protein resides in the membrane. This is an uncharacterized protein from Schizosaccharomyces pombe (strain 972 / ATCC 24843) (Fission yeast).